Consider the following 609-residue polypeptide: Tyrosine-protein kinase transforming protein Fes (609 aa).

Disordered regions lie at residues Ala-1 to His-20 and Arg-152 to Thr-208. In terms of domain architecture, F-BAR; degenerate spans Met-8–Lys-174. 2 stretches are compositionally biased toward basic and acidic residues: residues Lys-160 to Leu-175 and Gln-190 to Gly-206. The SH2 domain occupies Trp-247 to Val-336. In terms of domain architecture, Protein kinase spans Leu-348–Arg-609. Residues Ile-354–Val-362 and Lys-377 contribute to the ATP site. The active-site Proton acceptor is Asp-470. At Tyr-500 the chain carries Phosphotyrosine; by autocatalysis.

The protein belongs to the protein kinase superfamily. Tyr protein kinase family. Fes/fps subfamily.

It catalyses the reaction L-tyrosyl-[protein] + ATP = O-phospho-L-tyrosyl-[protein] + ADP + H(+). This chain is Tyrosine-protein kinase transforming protein Fes (V-FES), found in Felidae (cat family).